A 445-amino-acid polypeptide reads, in one-letter code: Adenylosuccinate synthetase (445 aa).

Residues glycine 12–lysine 18 and glycine 40–threonine 42 each bind GTP. Aspartate 13 (proton acceptor) is an active-site residue. Aspartate 13 and glycine 40 together coordinate Mg(2+). Residues aspartate 13–lysine 16, asparagine 38–histidine 41, threonine 128, arginine 142, glutamine 223, threonine 238, and arginine 302 each bind IMP. Residue histidine 41 is the Proton donor of the active site. Residue threonine 298–arginine 304 coordinates substrate. Residues arginine 304, lysine 330–aspartate 332, and serine 411–glycine 413 contribute to the GTP site.

The protein belongs to the adenylosuccinate synthetase family. Homodimer. Mg(2+) is required as a cofactor.

It localises to the cytoplasm. It carries out the reaction IMP + L-aspartate + GTP = N(6)-(1,2-dicarboxyethyl)-AMP + GDP + phosphate + 2 H(+). The protein operates within purine metabolism; AMP biosynthesis via de novo pathway; AMP from IMP: step 1/2. Plays an important role in the de novo pathway of purine nucleotide biosynthesis. Catalyzes the first committed step in the biosynthesis of AMP from IMP. The chain is Adenylosuccinate synthetase from Cyanothece sp. (strain PCC 7425 / ATCC 29141).